Consider the following 413-residue polypeptide: MRISPRLFLSKAERFVPKSGVYPQGFAVGGIHCGIKKPDVLDLAMLQNTSGKDAVAAAVFTQNKFKAAPVQVSAEILEKSGGAINSLIVNSGNANAVTGTKGLEDARSMVAATDEAAKNTKTASLVMSTGVIGNRLPIGNILSGIPVLGQQLGSTHAHWLQCAQAICTTDSFPKMVSKQFSLNGNTYALAGVAKGAGMICPNMATLLGFFATDAPVSRSALQSILAFAVDRSFNSISVDGDMSTNDTIVAIANGAAGGPLIENEDTPAFAALRGEITAFAQQLASLVVRDGEGATKFITIRVVNAKSYADAKCVASTVANSSLFKTAMFGNDANWGRILCAIGYAPVSGSSVDTTRTSVSFVPSEGEPLRLLVNGEPETVDENRALEILQKRGFGGGNRFGHRRKPRGHISDV.

Positions 168, 194, 205, and 292 each coordinate substrate. Thr205 serves as the catalytic Nucleophile.

It belongs to the ArgJ family. In terms of assembly, heterodimer of an alpha and a beta chain. Post-translationally, the alpha and beta chains are autoproteolytically processed from a single precursor protein within the mitochondrion.

The protein resides in the mitochondrion matrix. The enzyme catalyses N(2)-acetyl-L-ornithine + L-glutamate = N-acetyl-L-glutamate + L-ornithine. The catalysed reaction is L-glutamate + acetyl-CoA = N-acetyl-L-glutamate + CoA + H(+). It functions in the pathway amino-acid biosynthesis; L-arginine biosynthesis; L-ornithine and N-acetyl-L-glutamate from L-glutamate and N(2)-acetyl-L-ornithine (cyclic): step 1/1. Its pathway is amino-acid biosynthesis; L-arginine biosynthesis; N(2)-acetyl-L-ornithine from L-glutamate: step 1/4. In terms of biological role, catalyzes two activities which are involved in the cyclic version of arginine biosynthesis: the synthesis of acetylglutamate from glutamate and acetyl-CoA, and of ornithine by transacetylation between acetylornithine and glutamate. In Clavispora lusitaniae (strain ATCC 42720) (Yeast), this protein is Arginine biosynthesis bifunctional protein ArgJ, mitochondrial.